The chain runs to 420 residues: Phosphatidylinositol 5-phosphate 4-kinase type-2 gamma (420 aa).

At Ala2 the chain carries N-acetylalanine. Ser26 bears the Phosphoserine mark. In terms of domain architecture, PIPK spans 43–419 (AADPLVGVFL…RFLDFISNIF (377 aa)). Residues 69–75 (VMLLPDD) form a required for interaction with PIP5K1A region. Residue Ser349 is modified to Phosphoserine.

In terms of assembly, interacts with PIP5K1A; the interaction inhibits PIP5K1A kinase activity. Post-translationally, phosphorylated, phosphorylation is induced by EGF. As to expression, widely expressed, with the most abundant expression in kidney.

The protein resides in the endoplasmic reticulum. It is found in the cytoplasm. It carries out the reaction a 1,2-diacyl-sn-glycero-3-phospho-(1D-myo-inositol-5-phosphate) + ATP = a 1,2-diacyl-sn-glycero-3-phospho-(1D-myo-inositol-4,5-bisphosphate) + ADP + H(+). The catalysed reaction is 1,2-dihexadecanoyl-sn-glycero-3-phospho-(1D-myo-inositol-5-phosphate) + ATP = 1,2-dihexadecanoyl-sn-glycero-3-phospho-(1D-myo-inositol-4,5-bisphosphate) + ADP + H(+). It catalyses the reaction 1,2-dihexadecanoyl-sn-glycero-3-phospho-(1D-myo-inositol-5-phosphate) + GTP = 1,2-dihexadecanoyl-sn-glycero-3-phospho-(1D-myo-inositol-4,5-bisphosphate) + GDP + H(+). In terms of biological role, phosphatidylinositol 5-phosphate 4-kinase with low enzymatic activity. May be a GTP sensor, has higher GTP-dependent kinase activity than ATP-dependent kinase activity. PIP4Ks negatively regulate insulin signaling through a catalytic-independent mechanism. They interact with PIP5Ks and suppress PIP5K-mediated PtdIns(4,5)P2 synthesis and insulin-dependent conversion to PtdIns(3,4,5)P3. This chain is Phosphatidylinositol 5-phosphate 4-kinase type-2 gamma, found in Rattus norvegicus (Rat).